Consider the following 59-residue polypeptide: Small ribosomal subunit protein bS21 (59 aa).

Residues 40–59 (KPSIKKRAKSKAALKYKKQR) are disordered.

This sequence belongs to the bacterial ribosomal protein bS21 family.

The chain is Small ribosomal subunit protein bS21 from Protochlamydia amoebophila (strain UWE25).